Here is a 137-residue protein sequence, read N- to C-terminus: MPNQEQIKRMNDINDLIKLIASIDHRTFYRKSKDRIAYFRFKKKLFFVDDYTGDDVYPYEMGYGSPNGFSHGGNMWQLVNSFRKFIITGKCGELRDYKEIWAYSYEGCMKIRQKAKEIGFIETVDYPYSFDEWMNTN.

This Bacillus subtilis (strain 168) protein is SPbeta prophage-derived uncharacterized protein YoqU (yoqU).